A 324-amino-acid polypeptide reads, in one-letter code: Tyrosine--tRNA ligase (324 aa).

Tyr36 provides a ligand contact to L-tyrosine. A 'HIGH' region motif is present at residues 41–49 (PSGKVHLGH). L-tyrosine-binding residues include Tyr158, Gln162, Asp165, and Gln180. The 'KMSKS' region signature appears at 215–219 (KMSSS). Ser218 contributes to the ATP binding site.

This sequence belongs to the class-I aminoacyl-tRNA synthetase family. TyrS type 3 subfamily. In terms of assembly, homodimer.

Its subcellular location is the cytoplasm. It catalyses the reaction tRNA(Tyr) + L-tyrosine + ATP = L-tyrosyl-tRNA(Tyr) + AMP + diphosphate + H(+). Functionally, catalyzes the attachment of tyrosine to tRNA(Tyr) in a two-step reaction: tyrosine is first activated by ATP to form Tyr-AMP and then transferred to the acceptor end of tRNA(Tyr). The sequence is that of Tyrosine--tRNA ligase from Methanopyrus kandleri (strain AV19 / DSM 6324 / JCM 9639 / NBRC 100938).